The sequence spans 172 residues: Small ribosomal subunit protein uS5 (172 aa).

The S5 DRBM domain occupies Leu-17 to Ile-80.

It belongs to the universal ribosomal protein uS5 family. Part of the 30S ribosomal subunit. Contacts proteins S4 and S8.

Functionally, with S4 and S12 plays an important role in translational accuracy. In terms of biological role, located at the back of the 30S subunit body where it stabilizes the conformation of the head with respect to the body. The protein is Small ribosomal subunit protein uS5 of Variovorax paradoxus (strain S110).